The chain runs to 362 residues: Fructose-bisphosphate aldolase (362 aa).

A D-glyceraldehyde 3-phosphate-binding site is contributed by serine 63. The active-site Proton donor is the aspartate 112. Histidine 113, aspartate 147, glutamate 177, and histidine 229 together coordinate Zn(2+). Glycine 230 lines the dihydroxyacetone phosphate pocket. Histidine 268 contributes to the Zn(2+) binding site. Residues 269–271 (GGS) and 290–293 (NVDT) contribute to the dihydroxyacetone phosphate site.

This sequence belongs to the class II fructose-bisphosphate aldolase family. Homodimer. The cofactor is Zn(2+).

It catalyses the reaction beta-D-fructose 1,6-bisphosphate = D-glyceraldehyde 3-phosphate + dihydroxyacetone phosphate. It functions in the pathway carbohydrate degradation; glycolysis; D-glyceraldehyde 3-phosphate and glycerone phosphate from D-glucose: step 4/4. In terms of biological role, catalyzes the aldol condensation of dihydroxyacetone phosphate (DHAP or glycerone-phosphate) with glyceraldehyde 3-phosphate (G3P) to form fructose 1,6-bisphosphate (FBP) in gluconeogenesis and the reverse reaction in glycolysis. This Neurospora crassa (strain ATCC 24698 / 74-OR23-1A / CBS 708.71 / DSM 1257 / FGSC 987) protein is Fructose-bisphosphate aldolase (fba).